The sequence spans 309 residues: RING finger protein mug145 (309 aa).

A helical transmembrane segment spans residues 23–43 (ILLFALVIILSVIFINFFFFY). The segment at 205–247 (CIICYADYAFDDILRVLPCEHVFHTQCIDTWMTTMKASCPLCN) adopts an RING-type; atypical zinc-finger fold.

It localises to the membrane. Its function is as follows. Has a role in meiosis. The polypeptide is RING finger protein mug145 (mug145) (Schizosaccharomyces pombe (strain 972 / ATCC 24843) (Fission yeast)).